The chain runs to 1378 residues: DNA-directed RNA polymerase subunit beta (1378 aa).

It belongs to the RNA polymerase beta chain family. As to quaternary structure, the RNAP catalytic core consists of 2 alpha, 1 beta, 1 beta' and 1 omega subunit. When a sigma factor is associated with the core the holoenzyme is formed, which can initiate transcription.

It carries out the reaction RNA(n) + a ribonucleoside 5'-triphosphate = RNA(n+1) + diphosphate. DNA-dependent RNA polymerase catalyzes the transcription of DNA into RNA using the four ribonucleoside triphosphates as substrates. In Campylobacter jejuni (strain RM1221), this protein is DNA-directed RNA polymerase subunit beta.